The primary structure comprises 445 residues: Chromosomal replication initiator protein DnaA (445 aa).

Residues 1–73 (MSTHLTETWE…VNALKLLTSK (73 aa)) form a domain I, interacts with DnaA modulators region. A domain II region spans residues 73-106 (KKYNIDFIVTTEEKIEKNHNNEKSNIVVNDEMST). The interval 107–323 (MLNPKYTFDS…GALIRIVAFS (217 aa)) is domain III, AAA+ region. Residues Gly151, Gly153, Lys154, and Thr155 each coordinate ATP. Residues 324-445 (SLTNKEISVD…NDLNKRINQK (122 aa)) form a domain IV, binds dsDNA region.

This sequence belongs to the DnaA family. In terms of assembly, oligomerizes as a right-handed, spiral filament on DNA at oriC.

The protein localises to the cytoplasm. Plays an essential role in the initiation and regulation of chromosomal replication. ATP-DnaA binds to the origin of replication (oriC) to initiate formation of the DNA replication initiation complex once per cell cycle. Binds the DnaA box (a 9 base pair repeat at the origin) and separates the double-stranded (ds)DNA. Forms a right-handed helical filament on oriC DNA; dsDNA binds to the exterior of the filament while single-stranded (ss)DNA is stabiized in the filament's interior. The ATP-DnaA-oriC complex binds and stabilizes one strand of the AT-rich DNA unwinding element (DUE), permitting loading of DNA polymerase. After initiation quickly degrades to an ADP-DnaA complex that is not apt for DNA replication. Binds acidic phospholipids. The chain is Chromosomal replication initiator protein DnaA from Clostridium botulinum (strain Loch Maree / Type A3).